The following is a 531-amino-acid chain: MALLPVGIRFIISFSRDQWYRAFIFMLTFLLYASFHLSRKPISIVKGELHKQCTAGDGPESPFSDPSSSTRHGPTHWLLNNETDCGWAPFDKNNYQQLLGALDYAFLCAYAIGMYLSGIIGERLPIRYYLTFGMLASGAFTALFGLGYFYNIHSLGFYVVTQIINGLVQTTGWPSVVTCLSNWFGKGRRGLIMGIWNSHTSVGNILGSLIAGYWVSTCWGLSFIVPGAIVAAMGIVCFLFLIEHPKDVKCSSTLPTHPRASENGINRFRLQKQTTYSEKNGPLDPELQCLLLSDGKNPLHPSHIVVLPADGNMAAISFTGALRIPGVIEFSLCLLFAKLVSYTFLFWLPLYITSVDHLDAKKAGELSTLFDVGGIFGGILAGVISDRLEKRASTCGLMLLLAAPTLYVFSSVSRMGLEATIAMLLLSGALVSGPYALITTAVSADLGTHKSLKGNSHALSTVTAIIDGTGSVGAALGPLLAGLISPSGWSNVFYMLMFADACALLFLVRLIHKELSCPGPAAGIQAPLKEH.

Residues 18 to 38 (QWYRAFIFMLTFLLYASFHLS) traverse the membrane as a helical segment. A disordered region spans residues 53–72 (CTAGDGPESPFSDPSSSTRH). Transmembrane regions (helical) follow at residues 100–120 (GALD…SGII), 129–149 (YLTF…LGYF), 157–177 (FYVV…PSVV), 192–214 (IMGI…AGYW), 222–242 (SFIV…LFLI), 332–352 (LCLL…PLYI), 364–384 (GELS…AGVI), 392–412 (ASTC…FSSV), 419–439 (ATIA…ALIT), 464–484 (AIID…AGLI), and 488–508 (GWSN…LFLV).

It belongs to the major facilitator superfamily. Organophosphate:Pi antiporter (OPA) (TC 2.A.1.4) family.

The protein localises to the endoplasmic reticulum membrane. The catalysed reaction is D-glucose 6-phosphate(in) + phosphate(out) = D-glucose 6-phosphate(out) + phosphate(in). With respect to regulation, inhibited by vanadate but not by chlorogenic acid. Its function is as follows. Inorganic phosphate and glucose-6-phosphate antiporter. May transport cytoplasmic glucose-6-phosphate into the lumen of the endoplasmic reticulum and translocate inorganic phosphate into the opposite direction. Independent of a lumenal glucose-6-phosphatase. May not play a role in homeostatic regulation of blood glucose levels. The polypeptide is Glucose-6-phosphate exchanger SLC37A1 (Mus musculus (Mouse)).